Here is a 75-residue protein sequence, read N- to C-terminus: UPF0270 protein PSEEN1465 (75 aa).

It belongs to the UPF0270 family.

This Pseudomonas entomophila (strain L48) protein is UPF0270 protein PSEEN1465.